The primary structure comprises 343 residues: N-acetyl-gamma-glutamyl-phosphate reductase (343 aa).

Cys-149 is a catalytic residue.

It belongs to the NAGSA dehydrogenase family. Type 1 subfamily.

The protein resides in the cytoplasm. It carries out the reaction N-acetyl-L-glutamate 5-semialdehyde + phosphate + NADP(+) = N-acetyl-L-glutamyl 5-phosphate + NADPH + H(+). Its pathway is amino-acid biosynthesis; L-arginine biosynthesis; N(2)-acetyl-L-ornithine from L-glutamate: step 3/4. Functionally, catalyzes the NADPH-dependent reduction of N-acetyl-5-glutamyl phosphate to yield N-acetyl-L-glutamate 5-semialdehyde. The polypeptide is N-acetyl-gamma-glutamyl-phosphate reductase (Methanococcus maripaludis (strain C6 / ATCC BAA-1332)).